The following is a 253-amino-acid chain: CD151 antigen (253 aa).

Topologically, residues Met1 to Tyr18 are cytoplasmic. S-palmitoyl cysteine attachment occurs at residues Cys11 and Cys15. The helical transmembrane segment at Leu19 to Ile39 threads the bilayer. Residues Trp40 to Tyr57 are Extracellular-facing. A helical transmembrane segment spans residues Leu58–Gly78. The Cytoplasmic segment spans residues Cys79–Arg91. A helical transmembrane segment spans residues Leu92–Tyr112. Residues Ala113–Arg221 lie on the Extracellular side of the membrane. A glycan (N-linked (GlcNAc...) asparagine) is linked at Asn159. Residues Val222 to Cys242 traverse the membrane as a helical segment. S-palmitoyl cysteine attachment occurs at residues Cys242 and Cys243. Residues Cys243–Tyr253 lie on the Cytoplasmic side of the membrane.

Belongs to the tetraspanin (TM4SF) family. In terms of assembly, interacts with integrins ITGA3:ITGB1, ITGA5:ITGB1, ITGA3:ITGB1 and ITGA6:ITGB4 and with CD9 and CD181. Interacts (via the second extracellular domain) with integrin ITGAV:ITGB3. Interacts with ITGA3; this interaction modulates ITGA3 glycosylation pattern. Interacts with F11R. Interacts with RAC1 and CDC42; these interactions mediate physical association of RAC1 and CDC42 with integrin adhesion receptor complexes. In terms of processing, palmitoylated. Palmitoylation by ZDHHC2 regulates CD151 expression, association with other tetraspanin family proteins and function in cell adhesion. Ubiquitinated by RNF128 on lysine residues present in the tetraspanin amino terminus via 'Lys-48'-linked ubiquitin leading to proteasomal degradation. In terms of tissue distribution, expressed in a variety of tissues including vascular endothelium and epidermis. Expressed on erythroid cells, with a higher level of expression in erythroid precursors than on mature erythrocytes. Acts as a sensitive T-cell activation marker.

It localises to the cell membrane. Functionally, structural component of specialized membrane microdomains known as tetraspanin-enriched microdomains (TERMs), which act as platforms for receptor clustering and signaling. Plays a role in various cellular and molecular mechanism through its association with both integrin and non-integrin proteins. These interactions facilitate critical cellular functions, including cell-to-cell communication, wound healing, platelet aggregation, trafficking, cell motility, and angiogenesis. Via interaction with JAM-A/F11R and integrin ITGA3:ITGB1, promotes the recruitment of signaling molecules such as RAC1, CDC42 and RhoGTPases to facilitate the polarization of epithelial cells and the reorganization of the actin cytoskeleton, which are critical steps in cell migration process. Regulates the glycosylation pattern of ITGA3:ITGB1 thereby modulating its activity. Plays an essential role in the maintenance of central laminin-binding integrin ITGA6:ITGB4-containing adhesion complexes. Essential for the proper assembly of the glomerular and tubular basement membranes in kidney. Contributes to T-cell activation by modulating integrin signaling leading to activation of downstream targets PTK2 and MAPK1/MAPK3. (Microbial infection) Plays a role in human papillomavirus 16/HPV-16 endocytosis upon binding to cell surface receptor. In terms of biological role, (Microbial infection) Plays a role in human cytomegalovirus entry into host cell by contributing to entry receptor binding, membrane fusion, or release of the capsid. This chain is CD151 antigen (CD151), found in Homo sapiens (Human).